The chain runs to 527 residues: Palmitoleoyl-protein carboxylesterase NOTUM (527 aa).

Residues 1-19 form the signal peptide; that stretch reads MKSYLILNTLLLSLLKING. 3 N-linked (GlcNAc...) asparagine glycosylation sites follow: Asn64, Asn86, and Asn104. Ser203 acts as the Charge relay system in catalysis. N-linked (GlcNAc...) asparagine glycosylation occurs at Asn249. Residues Asp311 and His359 each act as charge relay system in the active site. The N-linked (GlcNAc...) asparagine glycan is linked to Asn451.

Belongs to the pectinacetylesterase family. Notum subfamily. In terms of tissue distribution, expressed in the anterior pole.

The protein localises to the secreted. The enzyme catalyses [Wnt protein]-O-(9Z)-hexadecenoyl-L-serine + H2O = [Wnt protein]-L-serine + (9Z)-hexadecenoate + H(+). Carboxylesterase that acts as a key negative regulator of the Wnt signaling pathway. Acts by specifically mediating depalmitoleoylation of WNT proteins. Serine palmitoleoylation of WNT proteins is required for efficient binding to frizzled receptors. Promotes head regeneration following amputation by inhibiting the Wnt signaling pathway. This chain is Palmitoleoyl-protein carboxylesterase NOTUM, found in Schmidtea mediterranea (Freshwater planarian flatworm).